The chain runs to 359 residues: Nicotinate-nucleotide--dimethylbenzimidazole phosphoribosyltransferase (359 aa).

Catalysis depends on glutamate 318, which acts as the Proton acceptor.

The protein belongs to the CobT family. In terms of assembly, homodimer.

It catalyses the reaction 5,6-dimethylbenzimidazole + nicotinate beta-D-ribonucleotide = alpha-ribazole 5'-phosphate + nicotinate + H(+). It functions in the pathway nucleoside biosynthesis; alpha-ribazole biosynthesis; alpha-ribazole from 5,6-dimethylbenzimidazole: step 1/2. In terms of biological role, catalyzes the synthesis of alpha-ribazole-5'-phosphate from nicotinate mononucleotide (NAMN) and 5,6-dimethylbenzimidazole (DMB). This is Nicotinate-nucleotide--dimethylbenzimidazole phosphoribosyltransferase from Escherichia coli O17:K52:H18 (strain UMN026 / ExPEC).